Reading from the N-terminus, the 277-residue chain is MLRVRILLIYLCTFVVITSTKTIEYTACNDTIIIPCIIDNPTKYIRWKLDNHDILTYNKTSKTTILSKWHTSARLHSLSDSDVSLIMEYKDILPGTYTCGDNTGIKYTVKLIQRHTNWFNDYQTMLMFIFTGITLFLLFLEIAYTSISVVFSTNLGILQVFGCVIAMIELCGAFLFYPSMFTLRHIIGLLMMTLPSIFLIITKVFSFWLLCKLSCAVHLIIYYQLAGYILTVLGLGLSLKECVDGTLLLSGLGTIMVSEHFGLLFLVCFPSTQRDYY.

Residues Asn29 and Asn58 are each glycosylated (N-linked (GlcNAc...) asparagine; by host). 5 consecutive transmembrane segments (helical) span residues Thr124–Tyr144, Gly156–Phe176, Ile186–Ser206, Leu219–Leu239, and Leu247–Val267.

Belongs to the orthopoxvirus OPG166 protein family.

It is found in the host membrane. Its function is as follows. Promotes, when overexpressed, the influx of extracellular Ca(2+), leading to membrane permeability and host cell necrosis. This Cynomys gunnisoni (Gunnison's prairie dog) protein is Protein OPG166 (OPG166).